The primary structure comprises 958 residues: Valine--tRNA ligase (958 aa).

Positions 45–55 match the 'HIGH' region motif; sequence PNVTGSLHMGH. A 'KMSKS' region motif is present at residues 571 to 575; that stretch reads KMSKS. Residue K574 coordinates ATP. A coiled-coil region spans residues 892–958; that stretch reads AAERTRLDKE…EALERLKQAS (67 aa).

Belongs to the class-I aminoacyl-tRNA synthetase family. ValS type 1 subfamily. In terms of assembly, monomer.

It is found in the cytoplasm. It catalyses the reaction tRNA(Val) + L-valine + ATP = L-valyl-tRNA(Val) + AMP + diphosphate. Catalyzes the attachment of valine to tRNA(Val). As ValRS can inadvertently accommodate and process structurally similar amino acids such as threonine, to avoid such errors, it has a 'posttransfer' editing activity that hydrolyzes mischarged Thr-tRNA(Val) in a tRNA-dependent manner. This is Valine--tRNA ligase from Bradyrhizobium diazoefficiens (strain JCM 10833 / BCRC 13528 / IAM 13628 / NBRC 14792 / USDA 110).